The primary structure comprises 380 residues: Cytochrome b (380 aa).

Transmembrane regions (helical) follow at residues 34–54 (FGSL…LLAM), 78–99 (WLIR…YLHI), 114–134 (WNTG…GYVL), and 179–199 (FFAL…IHLT). 2 residues coordinate heme b: His-84 and His-98. Heme b-binding residues include His-183 and His-197. His-202 provides a ligand contact to a ubiquinone. Helical transmembrane passes span 227-247 (LKDA…ALFS), 289-309 (LGGV…PLLH), 321-341 (LSQL…WIGS), and 348-368 (FIII…ILFP).

It belongs to the cytochrome b family. The cytochrome bc1 complex contains 11 subunits: 3 respiratory subunits (MT-CYB, CYC1 and UQCRFS1), 2 core proteins (UQCRC1 and UQCRC2) and 6 low-molecular weight proteins (UQCRH/QCR6, UQCRB/QCR7, UQCRQ/QCR8, UQCR10/QCR9, UQCR11/QCR10 and a cleavage product of UQCRFS1). This cytochrome bc1 complex then forms a dimer. The cofactor is heme b.

The protein localises to the mitochondrion inner membrane. In terms of biological role, component of the ubiquinol-cytochrome c reductase complex (complex III or cytochrome b-c1 complex) that is part of the mitochondrial respiratory chain. The b-c1 complex mediates electron transfer from ubiquinol to cytochrome c. Contributes to the generation of a proton gradient across the mitochondrial membrane that is then used for ATP synthesis. This is Cytochrome b (MT-CYB) from Oceanodroma tethys (Wedge-rumped storm-petrel).